A 546-amino-acid chain; its full sequence is Chaperonin GroEL 4 (546 aa).

ATP-binding positions include 30-33, Lys51, 87-91, Gly415, and Asp496; these read TLGP and DGTTT.

The protein belongs to the chaperonin (HSP60) family. Forms a cylinder of 14 subunits composed of two heptameric rings stacked back-to-back. Interacts with the co-chaperonin GroES.

The protein resides in the cytoplasm. The enzyme catalyses ATP + H2O + a folded polypeptide = ADP + phosphate + an unfolded polypeptide.. In terms of biological role, together with its co-chaperonin GroES, plays an essential role in assisting protein folding. The GroEL-GroES system forms a nano-cage that allows encapsulation of the non-native substrate proteins and provides a physical environment optimized to promote and accelerate protein folding. This chain is Chaperonin GroEL 4, found in Bradyrhizobium sp. (strain BTAi1 / ATCC BAA-1182).